A 246-amino-acid polypeptide reads, in one-letter code: UPF0309 protein TTE0306 (246 aa).

In terms of domain architecture, SIS spans I31–E212.

The protein belongs to the UPF0309 family.

The chain is UPF0309 protein TTE0306 from Caldanaerobacter subterraneus subsp. tengcongensis (strain DSM 15242 / JCM 11007 / NBRC 100824 / MB4) (Thermoanaerobacter tengcongensis).